We begin with the raw amino-acid sequence, 456 residues long: Exodeoxyribonuclease 7 large subunit (456 aa).

The protein belongs to the XseA family. As to quaternary structure, heterooligomer composed of large and small subunits.

The protein resides in the cytoplasm. It catalyses the reaction Exonucleolytic cleavage in either 5'- to 3'- or 3'- to 5'-direction to yield nucleoside 5'-phosphates.. Its function is as follows. Bidirectionally degrades single-stranded DNA into large acid-insoluble oligonucleotides, which are then degraded further into small acid-soluble oligonucleotides. The chain is Exodeoxyribonuclease 7 large subunit from Azotobacter vinelandii (strain DJ / ATCC BAA-1303).